Here is a 637-residue protein sequence, read N- to C-terminus: Type II restriction enzyme and methyltransferase RM.BcgI (637 aa).

This sequence in the C-terminal section; belongs to the N(4)/N(6)-methyltransferase family. As to quaternary structure, heterotrimer of two A and one B subunit. Both subunits are necessary for DNA-binding, which is sequence non-specific. Mg(2+) is required as a cofactor.

The catalysed reaction is Endonucleolytic cleavage of DNA to give specific double-stranded fragments with terminal 5'-phosphates.. The enzyme catalyses a 2'-deoxyadenosine in DNA + S-adenosyl-L-methionine = an N(6)-methyl-2'-deoxyadenosine in DNA + S-adenosyl-L-homocysteine + H(+). Its activity is regulated as follows. DNA restriction requires S-adenosyl-L-methionine and Mg(2+), and is inhibited by S-adenosyl-homocysteine. SAM may be a cofactor for DNA restriction. A B, G, H and S subtype restriction enzyme that recognizes the double-stranded sequence 5'-CGAN(6)TGC-3' and cleaves bilaterally and symmetrically 10 base pairs upstream and 12 base pairs downstream of the sequence to release a 34-base pair fragment. Methylation of the recognition sequence occurs on the adenine in either one or both strands; seems to methylate restricted DNA. This subunit has no methylation or DNA restriction activity on its own. The protein is Type II restriction enzyme and methyltransferase RM.BcgI of Heyndrickxia coagulans (Weizmannia coagulans).